A 586-amino-acid chain; its full sequence is Phosphomethylpyrimidine synthase (586 aa).

The segment at 1 to 59 (MKQSVSAEQIELKSSLPGSKKVYVDGPREGMKVPMREIEQSDTNGVPNPPIRVYDTSGP) is disordered. Residues 22–39 (VYVDGPREGMKVPMREIE) show a composition bias toward basic and acidic residues. Residues Asn-193, Met-222, Tyr-251, His-287, 307–309 (SRG), 348–351 (DGLR), and Glu-387 contribute to the substrate site. His-391 contributes to the Zn(2+) binding site. Residue Tyr-414 coordinates substrate. Zn(2+) is bound at residue His-455. Positions 535, 538, and 543 each coordinate [4Fe-4S] cluster.

Belongs to the ThiC family. [4Fe-4S] cluster is required as a cofactor.

It catalyses the reaction 5-amino-1-(5-phospho-beta-D-ribosyl)imidazole + S-adenosyl-L-methionine = 4-amino-2-methyl-5-(phosphooxymethyl)pyrimidine + CO + 5'-deoxyadenosine + formate + L-methionine + 3 H(+). The protein operates within cofactor biosynthesis; thiamine diphosphate biosynthesis. In terms of biological role, catalyzes the synthesis of the hydroxymethylpyrimidine phosphate (HMP-P) moiety of thiamine from aminoimidazole ribotide (AIR) in a radical S-adenosyl-L-methionine (SAM)-dependent reaction. This is Phosphomethylpyrimidine synthase from Bacillus cereus (strain ZK / E33L).